Here is a 307-residue protein sequence, read N- to C-terminus: MLKNKHLLDPSDFTIEEFDEIFKLAHQIMANPKEYQNICNGKILATLFYEPSTRTRLSFESAMLRLGGQVIGFSEPNSSSVSKGESLRDTIKTVNCYADLIAMRHPLEGAAKVASMYSDIPVINAGDGGHQHPTQTLTDLLTIKEYKGNLEGNTIALCGDLKFGRTVHSLIKALSRYKNNKFILISPIELRIPNYIREQILEKNNIEYKEITSLEEGIKEADILYMTRIQRERFVDQSEYERLKDVYVLDEAKMKGAKEDMMVLHPLPRVNEIAYEVDEDSRAFYFKQAKCGMYVRMALMAKLLGEA.

Residues arginine 54 and threonine 55 each contribute to the carbamoyl phosphate site. L-aspartate is bound at residue lysine 83. Residues arginine 104, histidine 132, and glutamine 135 each contribute to the carbamoyl phosphate site. The L-aspartate site is built by arginine 165 and arginine 228. Residues leucine 267 and proline 268 each contribute to the carbamoyl phosphate site.

The protein belongs to the aspartate/ornithine carbamoyltransferase superfamily. ATCase family. As to quaternary structure, heterododecamer (2C3:3R2) of six catalytic PyrB chains organized as two trimers (C3), and six regulatory PyrI chains organized as three dimers (R2).

The catalysed reaction is carbamoyl phosphate + L-aspartate = N-carbamoyl-L-aspartate + phosphate + H(+). It functions in the pathway pyrimidine metabolism; UMP biosynthesis via de novo pathway; (S)-dihydroorotate from bicarbonate: step 2/3. Functionally, catalyzes the condensation of carbamoyl phosphate and aspartate to form carbamoyl aspartate and inorganic phosphate, the committed step in the de novo pyrimidine nucleotide biosynthesis pathway. The sequence is that of Aspartate carbamoyltransferase catalytic subunit from Clostridium perfringens (strain ATCC 13124 / DSM 756 / JCM 1290 / NCIMB 6125 / NCTC 8237 / Type A).